The primary structure comprises 510 residues: Maturase K (510 aa).

Belongs to the intron maturase 2 family. MatK subfamily.

It localises to the plastid. The protein resides in the chloroplast. Its function is as follows. Usually encoded in the trnK tRNA gene intron. Probably assists in splicing its own and other chloroplast group II introns. The chain is Maturase K from Thuja plicata (Western red-cedar).